The following is a 331-amino-acid chain: ADP-L-glycero-D-manno-heptose-6-epimerase (331 aa).

Residues 11–12 (FI), 32–33 (DN), lysine 39, lysine 54, 75–79 (EGACS), and asparagine 92 contribute to the NADP(+) site. Residue tyrosine 139 is the Proton acceptor of the active site. Lysine 143 provides a ligand contact to NADP(+). Asparagine 168 is a binding site for substrate. NADP(+) is bound by residues valine 169 and lysine 177. Lysine 177 functions as the Proton acceptor in the catalytic mechanism. Substrate is bound by residues arginine 179, histidine 186, 200–203 (FGEY), arginine 213, and tyrosine 292.

This sequence belongs to the NAD(P)-dependent epimerase/dehydratase family. HldD subfamily. As to quaternary structure, homopentamer. Requires NADP(+) as cofactor.

The enzyme catalyses ADP-D-glycero-beta-D-manno-heptose = ADP-L-glycero-beta-D-manno-heptose. It functions in the pathway nucleotide-sugar biosynthesis; ADP-L-glycero-beta-D-manno-heptose biosynthesis; ADP-L-glycero-beta-D-manno-heptose from D-glycero-beta-D-manno-heptose 7-phosphate: step 4/4. In terms of biological role, catalyzes the interconversion between ADP-D-glycero-beta-D-manno-heptose and ADP-L-glycero-beta-D-manno-heptose via an epimerization at carbon 6 of the heptose. This is ADP-L-glycero-D-manno-heptose-6-epimerase from Cupriavidus taiwanensis (strain DSM 17343 / BCRC 17206 / CCUG 44338 / CIP 107171 / LMG 19424 / R1) (Ralstonia taiwanensis (strain LMG 19424)).